Here is a 453-residue protein sequence, read N- to C-terminus: Probable glycine dehydrogenase (decarboxylating) subunit 1 (453 aa).

The protein belongs to the GcvP family. N-terminal subunit subfamily. The glycine cleavage system is composed of four proteins: P, T, L and H. In this organism, the P 'protein' is a heterodimer of two subunits.

It catalyses the reaction N(6)-[(R)-lipoyl]-L-lysyl-[glycine-cleavage complex H protein] + glycine + H(+) = N(6)-[(R)-S(8)-aminomethyldihydrolipoyl]-L-lysyl-[glycine-cleavage complex H protein] + CO2. Its function is as follows. The glycine cleavage system catalyzes the degradation of glycine. The P protein binds the alpha-amino group of glycine through its pyridoxal phosphate cofactor; CO(2) is released and the remaining methylamine moiety is then transferred to the lipoamide cofactor of the H protein. The polypeptide is Probable glycine dehydrogenase (decarboxylating) subunit 1 (Caulobacter sp. (strain K31)).